The sequence spans 208 residues: MKIVEVKHPLVKHKLGLMREGDISTKRFRELATEVASLLTYEATSDFETEKVTIEGWNGPVQVDQIKGKKVTVVPILRAGLGMMDGVLEHIPSARISVVGIYRDEETLEPVPYFNKLATNIEERIAMVVDPMLATGGSMIATIDLLKEKGCNQIKVLVLVAAPEGIAALEKAHPDVELYTAAIDEKLNDKGYIVPGLGDAGDKIFGTK.

Residues Arg78, Arg103, and 130 to 138 contribute to the 5-phospho-alpha-D-ribose 1-diphosphate site; that span reads DPMLATGGS. Uracil is bound by residues Ile193 and 198–200; that span reads GDA. Asp199 serves as a coordination point for 5-phospho-alpha-D-ribose 1-diphosphate.

The protein belongs to the UPRTase family. Mg(2+) is required as a cofactor.

The catalysed reaction is UMP + diphosphate = 5-phospho-alpha-D-ribose 1-diphosphate + uracil. Its pathway is pyrimidine metabolism; UMP biosynthesis via salvage pathway; UMP from uracil: step 1/1. With respect to regulation, allosterically activated by GTP. Catalyzes the conversion of uracil and 5-phospho-alpha-D-ribose 1-diphosphate (PRPP) to UMP and diphosphate. The sequence is that of Uracil phosphoribosyltransferase from Vibrio cholerae serotype O1 (strain ATCC 39541 / Classical Ogawa 395 / O395).